Reading from the N-terminus, the 501-residue chain is Xylulose kinase (501 aa).

81-82 (MH) is a substrate binding site. The Proton acceptor role is filled by Asp-239.

It belongs to the FGGY kinase family.

It carries out the reaction D-xylulose + ATP = D-xylulose 5-phosphate + ADP + H(+). In terms of biological role, catalyzes the phosphorylation of D-xylulose to D-xylulose 5-phosphate. The protein is Xylulose kinase of Lactococcus lactis subsp. lactis (strain IL1403) (Streptococcus lactis).